The primary structure comprises 655 residues: Sphingomyelin phosphodiesterase 3 (655 aa).

Residues 1–10 (MVLYTTPFPN) are Cytoplasmic-facing. The segment at residues 11–31 (SCLSALHCVSWALIFPCYWLV) is an intramembrane region (helical). At 32 to 64 (DRLAASFIPTTYEKRQRADDPCCLQLLCTALFT) the chain is on the cytoplasmic side. Residues C53, C54, and C59 are each lipidated (S-palmitoyl cysteine). The helical intramembrane region spans 65–85 (PIYLALLVASLPFAFLGFLFW). Over 86–655 (SPLQSARRPY…LMVSSGEEEA (570 aa)) the chain is Cytoplasmic. A Phosphoserine modification is found at S178. The segment at 210–319 (VEYKGDGGRH…DTSASGEPGA (110 aa)) is disordered. 2 stretches are compositionally biased toward basic and acidic residues: residues 212–222 (YKGDGGRHPGD) and 248–257 (GGEEGGRPPE). A compositionally biased stretch (polar residues) spans 279–299 (TPNHNQQDGDSGSLGSPSASR). S291 carries the phosphoserine modification. Position 364 (E364) interacts with Mg(2+). 2 S-palmitoyl cysteine lipidation sites follow: C397 and C398. H639 acts as the Proton acceptor in catalysis.

This sequence belongs to the neutral sphingomyelinase family. The cofactor is Mg(2+). In terms of processing, palmitoylated, palmitoylation-deficient proteins are targeted for lysosomal degradation. As to expression, predominantly expressed in brain.

Its subcellular location is the golgi apparatus membrane. The protein resides in the cell membrane. It catalyses the reaction a sphingomyelin + H2O = phosphocholine + an N-acylsphing-4-enine + H(+). The catalysed reaction is N-(15Z-tetracosenoyl)sphing-4-enine-1-phosphocholine + H2O = N-(15Z-tetracosenoyl)-sphing-4-enine + phosphocholine + H(+). The enzyme catalyses N-(tetracosanoyl)-sphing-4-enine-1-phosphocholine + H2O = N-tetracosanoyl-sphing-4-enine + phosphocholine + H(+). It carries out the reaction an N-(acyl)-sphingosylphosphocholine + H2O = an N-acyl-sphingoid base + phosphocholine + H(+). It catalyses the reaction 1-hexadecanoyl-sn-glycero-3-phosphocholine + H2O = 1-hexadecanoyl-sn-glycerol + phosphocholine + H(+). The catalysed reaction is 1-O-octadecyl-sn-glycero-3-phosphocholine + H2O = 1-O-octadecyl-sn-glycerol + phosphocholine + H(+). The enzyme catalyses a sphingosylphosphocholine + H2O = a sphingoid base + phosphocholine + H(+). It carries out the reaction N-(hexadecanoyl)-sphing-4-enine-1-phosphocholine + H2O = N-hexadecanoylsphing-4-enine + phosphocholine + H(+). It participates in lipid metabolism; sphingolipid metabolism. Its activity is regulated as follows. Inhibited by nSMase inhibitor GW4869. Binding of anionic phospholipids (APLs) such as phosphatidylserine (PS) and phosphatidic acid (PA) increases enzymatic activity. Functionally, catalyzes the hydrolysis of sphingomyelin to form ceramide and phosphocholine. Ceramide mediates numerous cellular functions, such as apoptosis and growth arrest, and is capable of regulating these 2 cellular events independently. Also hydrolyzes sphingosylphosphocholine. Regulates the cell cycle by acting as a growth suppressor in confluent cells. Probably acts as a regulator of postnatal development and participates in bone and dentin mineralization. Binds to anionic phospholipids (APLs) such as phosphatidylserine (PS) and phosphatidic acid (PA) that modulate enzymatic activity and subcellular location. May be involved in IL-1-beta-induced JNK activation in hepatocytes. May act as a mediator in transcriptional regulation of NOS2/iNOS via the NF-kappa-B activation under inflammatory conditions. The protein is Sphingomyelin phosphodiesterase 3 of Homo sapiens (Human).